Here is a 153-residue protein sequence, read N- to C-terminus: Insulin-like growth factor 1 (153 aa).

The b stretch occupies residues 49–77 (GPETLCGAELVDALQFVCGDRGFYFSKPT). 3 disulfides stabilise this stretch: C54-C96, C66-C109, and C95-C100. Residues 78–89 (GYGSSSRRLHHK) form a c region. Residues 90 to 110 (GIVDECCFQSCDLRRLEMYCA) form an a region. The interval 111 to 118 (PIKPPKSA) is d. A propeptide spans 119–153 (RSVRAQRHTDMPKAQKEVHLKNTSRGNTGNRNYRM) (e peptide). Residues 119 to 153 (RSVRAQRHTDMPKAQKEVHLKNTSRGNTGNRNYRM) are disordered. The segment covering 125–138 (RHTDMPKAQKEVHL) has biased composition (basic and acidic residues). Positions 139 to 153 (KNTSRGNTGNRNYRM) are enriched in polar residues.

The protein belongs to the insulin family. Forms a ternary complex with IGFR1 and ITGAV:ITGB3. Forms a ternary complex with IGFR1 and ITGA6:ITGB4. Forms a ternary complex with IGFBP3 and ALS.

The protein localises to the secreted. Its function is as follows. The insulin-like growth factors, isolated from plasma, are structurally and functionally related to insulin but have a much higher growth-promoting activity. Acts as a ligand for IGF1R. Binds to the alpha subunit of IGF1R, leading to the activation of the intrinsic tyrosine kinase activity which autophosphorylates tyrosine residues in the beta subunit thus initiatiating a cascade of down-stream signaling events leading to activation of the PI3K-AKT/PKB and the Ras-MAPK pathways. Binds to integrins. Its binding to integrins and subsequent ternary complex formation with integrins and IGFR1 are essential for IGF1 signaling. In Gallus gallus (Chicken), this protein is Insulin-like growth factor 1.